The sequence spans 101 residues: Ubiquitin-related modifier 1 homolog (101 aa).

At G101 the chain carries 1-thioglycine. G101 is covalently cross-linked (Glycyl lysine isopeptide (Gly-Lys) (interchain with K-? in acceptor proteins)).

Belongs to the URM1 family. As to quaternary structure, interacts with cer. Post-translationally, C-terminal thiocarboxylation occurs in 2 steps, it is first acyl-adenylated (-COAMP) via the hesA/moeB/thiF part of the MOCS3 homolog, then thiocarboxylated (-COSH) via the rhodanese domain of the MOCS3 homolog.

It localises to the cytoplasm. It functions in the pathway tRNA modification; 5-methoxycarbonylmethyl-2-thiouridine-tRNA biosynthesis. Acts as a sulfur carrier required for 2-thiolation of mcm(5)S(2)U at tRNA wobble positions of cytosolic tRNA(Lys), tRNA(Glu) and tRNA(Gln). Serves as sulfur donor in tRNA 2-thiolation reaction by being thiocarboxylated (-COSH) at its C-terminus by MOCS3. The sulfur is then transferred to tRNA to form 2-thiolation of mcm(5)S(2)U. Also acts as a ubiquitin-like protein (UBL) that is covalently conjugated via an isopeptide bond to lysine residues of target proteins such as Prx2/Jafrac1, Ciao1, Eip71CD and GILT1. The thiocarboxylated form serves as substrate for conjugation and oxidative stress specifically induces the formation of UBL-protein conjugates. The chain is Ubiquitin-related modifier 1 homolog from Drosophila simulans (Fruit fly).